The following is a 395-amino-acid chain: Thyrotropin-releasing hormone receptor (395 aa).

Topologically, residues 1–30 (MENGTGDEQNHTGLLLSSQEFVTAEYQVVT) are extracellular. N-linked (GlcNAc...) asparagine glycosylation is found at Asn-3 and Asn-10. Residues 31-53 (ILLVLLICGLGIVGNIMVVLVVL) traverse the membrane as a helical segment. Residues 54–63 (RTKHMRTPTN) are Cytoplasmic-facing. The chain crosses the membrane as a helical span at residues 64–85 (CYLVSLAVADLMVLVAAGLPNI). The Extracellular portion of the chain corresponds to 86–101 (TESLYKSWVYGYVGCL). Cys-100 and Cys-181 are oxidised to a cystine. The chain crosses the membrane as a helical span at residues 102–123 (CITYLQYLGINASSFSITAFTI). Residues 124–146 (ERYIAICHPIKAQFLCTFSRAKK) lie on the Cytoplasmic side of the membrane. The chain crosses the membrane as a helical span at residues 147–170 (IIIFVWSFASVYCMLWFFLLDLNI). Over 171–195 (AVYKDTTVVSCGYKVSRSYYSPIYM) the chain is Extracellular. The chain crosses the membrane as a helical span at residues 196-217 (MDFGIFYVLPMVLATVLYGLIA). Residues 218-268 (RILFLNPIPSDPKENSNTWKNDMAQQNKTVNSKMTNKSFNSTIASRRQVTK) are Cytoplasmic-facing. Residues 269 to 290 (MLAVVVVLFAFLWMPYRTLVVV) traverse the membrane as a helical segment. Residues 291 to 298 (NSFLSSPF) are Extracellular-facing. The helical transmembrane segment at 299-321 (QENWFLLFCRICIYLNSAINPVI) threads the bilayer. Topologically, residues 322–395 (YNLMSQKFRA…IGDTCLSSEA (74 aa)) are cytoplasmic.

It belongs to the G-protein coupled receptor 1 family.

It is found in the cell membrane. Receptor for thyrotropin-releasing hormone (TRH). Upon ligand binding, this G-protein-coupled receptor triggers activation of the phosphatidylinositol (IP3)-calcium-protein kinase C (PKC) pathway. This is Thyrotropin-releasing hormone receptor (TRHR) from Gallus gallus (Chicken).